A 234-amino-acid chain; its full sequence is Orotate phosphoribosyltransferase (234 aa).

Lys-30 is a binding site for 5-phospho-alpha-D-ribose 1-diphosphate. Phe-38–Phe-39 provides a ligand contact to orotate. 5-phospho-alpha-D-ribose 1-diphosphate contacts are provided by residues Tyr-76–Lys-77, Arg-103, Lys-104, Lys-107, His-109, and Asp-128–Ala-136. Thr-132 and Arg-160 together coordinate orotate.

This sequence belongs to the purine/pyrimidine phosphoribosyltransferase family. PyrE subfamily. Homodimer. The cofactor is Mg(2+).

The catalysed reaction is orotidine 5'-phosphate + diphosphate = orotate + 5-phospho-alpha-D-ribose 1-diphosphate. Its pathway is pyrimidine metabolism; UMP biosynthesis via de novo pathway; UMP from orotate: step 1/2. Its function is as follows. Catalyzes the transfer of a ribosyl phosphate group from 5-phosphoribose 1-diphosphate to orotate, leading to the formation of orotidine monophosphate (OMP). This Chromohalobacter salexigens (strain ATCC BAA-138 / DSM 3043 / CIP 106854 / NCIMB 13768 / 1H11) protein is Orotate phosphoribosyltransferase.